The sequence spans 56 residues: Large ribosomal subunit protein bL33 (56 aa).

It belongs to the bacterial ribosomal protein bL33 family.

The polypeptide is Large ribosomal subunit protein bL33 (Orientia tsutsugamushi (strain Ikeda) (Rickettsia tsutsugamushi)).